The following is a 110-amino-acid chain: UPF0060 membrane protein Haur_1798 (110 aa).

4 helical membrane passes run 7 to 27, 33 to 53, 63 to 83, and 89 to 109; these read VVLF…VWQW, SIWF…LPTL, VYAA…WLID, and QPSL…LYWP.

Belongs to the UPF0060 family.

It localises to the cell membrane. The polypeptide is UPF0060 membrane protein Haur_1798 (Herpetosiphon aurantiacus (strain ATCC 23779 / DSM 785 / 114-95)).